We begin with the raw amino-acid sequence, 704 residues long: Elongation factor G (704 aa).

Residues 8–291 (DKVRNIGIMA…AVVDYLASPL (284 aa)) form the tr-type G domain. Residues 17-24 (AHIDAGKT), 90-94 (DTPGH), and 144-147 (NKMD) contribute to the GTP site.

Belongs to the TRAFAC class translation factor GTPase superfamily. Classic translation factor GTPase family. EF-G/EF-2 subfamily.

It localises to the cytoplasm. Functionally, catalyzes the GTP-dependent ribosomal translocation step during translation elongation. During this step, the ribosome changes from the pre-translocational (PRE) to the post-translocational (POST) state as the newly formed A-site-bound peptidyl-tRNA and P-site-bound deacylated tRNA move to the P and E sites, respectively. Catalyzes the coordinated movement of the two tRNA molecules, the mRNA and conformational changes in the ribosome. The chain is Elongation factor G from Chlorobium phaeovibrioides (strain DSM 265 / 1930) (Prosthecochloris vibrioformis (strain DSM 265)).